Consider the following 304-residue polypeptide: D-alanine--D-alanine ligase (304 aa).

The 195-residue stretch at 99 to 293 (KKILRYEGIE…YSKLLDMIIE (195 aa)) folds into the ATP-grasp domain. Position 126-181 (126-181 (LDKLGFPLVVKPNSGGSSVGVKIVYDKDELISMLETVFEWDSEVVIEKYIKGEEIT)) interacts with ATP. Mg(2+) contacts are provided by aspartate 248, glutamate 260, and asparagine 262.

It belongs to the D-alanine--D-alanine ligase family. Requires Mg(2+) as cofactor. The cofactor is Mn(2+).

The protein localises to the cytoplasm. The enzyme catalyses 2 D-alanine + ATP = D-alanyl-D-alanine + ADP + phosphate + H(+). The protein operates within cell wall biogenesis; peptidoglycan biosynthesis. In terms of biological role, cell wall formation. This is D-alanine--D-alanine ligase from Bacillus anthracis (strain A0248).